A 690-amino-acid polypeptide reads, in one-letter code: F-box/LRR-repeat protein 5 (690 aa).

The hemerythrin-like stretch occupies residues 1 to 159 (MAPFPDEVDV…IKKKVIAQHC (159 aa)). Fe(3+) is bound by residues histidine 15, histidine 57, glutamate 58, glutamate 61, histidine 80, histidine 126, and glutamate 130. Residues 202–248 (STGITHLPPEVMLSIFSYLNPQELCRCSQVSTKWSQLAKTGSLWKHL) enclose the F-box domain. LRR repeat units follow at residues 340–364 (SSAV…LDLT), 365–392 (QTDI…DLSG), 393–418 (CEKI…QSGF), 478–507 (VWML…CVME), 575–606 (TTLP…SLSG), 607–634 (CYQI…NLSG), and 635–660 (CLTV…YFYY). Residues cysteine 661, cysteine 675, cysteine 685, and cysteine 686 each coordinate [2Fe-2S] cluster.

As to quaternary structure, part of a SCF (SKP1-cullin-F-box) protein ligase complex. Interacts with ACO1/IRP1, IREB2/IRP2; the interaction depends on the [2Fe-2S] cluster. Interacts with DCTN1/p150-glued. The cofactor is [2Fe-2S] cluster. Polybiquitinated upon iron and oxygen depletion, leading to its degradation by the proteasome. Ubiquitination is regulated by the hemerythrin-like region that acts as an oxygen and iron sensor. Undergoes constitutive ubiquitin-dependent degradation at the steady state by HERC2. Ubiquitously expressed. Highly expressed in early embryogenesis with expression decreasing as the embryo progresses through development (E11 and E15).

The protein resides in the cytoplasm. Its subcellular location is the perinuclear region. The protein localises to the nucleus. It participates in protein modification; protein ubiquitination. Its activity is regulated as follows. An iron-sulfur cluster promotes IRP2 polyubiquitination and degradation in response to both iron and oxygen concentrations. In terms of biological role, component of some SCF (SKP1-cullin-F-box) protein ligase complex that plays a central role in iron homeostasis by promoting the ubiquitination and subsequent degradation of IREB2/IRP2. The C-terminal domain of FBXL5 contains a redox-sensitive [2Fe-2S] cluster that, upon oxidation, promotes binding to IRP2 to effect its oxygen-dependent degradation. Under iron deficiency conditions, the N-terminal hemerythrin-like (Hr) region, which contains a diiron metal center, cannot bind iron and undergoes conformational changes that destabilize the FBXL5 protein and cause its ubiquitination and degradation. When intracellular iron levels start rising, the Hr region is stabilized. Additional increases in iron levels facilitate the assembly and incorporation of a redox active [2Fe-2S] cluster in the C-terminal domain. Only when oxygen level is high enough to maintain the cluster in its oxidized state can FBXL5 recruit IRP2 as a substrate for polyubiquination and degradation. Promotes ubiquitination and subsequent degradation of the dynactin complex component DCTN1. Within the nucleus, promotes the ubiquitination of SNAI1; preventing its interaction with DNA and promoting its degradation. Negatively regulates DNA damage response by mediating the ubiquitin-proteasome degradation of the DNA repair protein NABP2. This is F-box/LRR-repeat protein 5 (Fbxl5) from Mus musculus (Mouse).